The primary structure comprises 545 residues: Esterase-5B (545 aa).

A signal peptide spans 1 to 19 (MYCEKLILLLGCFWISSSA). C84 and C103 are oxidised to a cystine. The N-linked (GlcNAc...) asparagine glycan is linked to N113. S207 (acyl-ester intermediate) is an active-site residue. A disulfide bond links C259 and C271. An N-linked (GlcNAc...) asparagine glycan is attached at N421. H467 functions as the Charge relay system in the catalytic mechanism. N507 carries N-linked (GlcNAc...) asparagine glycosylation. The cysteines at positions 515 and 536 are disulfide-linked.

The protein belongs to the type-B carboxylesterase/lipase family. In terms of assembly, homodimer.

It localises to the secreted. It catalyses the reaction a carboxylic ester + H2O = an alcohol + a carboxylate + H(+). The protein is Esterase-5B (Est-5B) of Drosophila miranda (Fruit fly).